Consider the following 833-residue polypeptide: Patatin-like phospholipase domain-containing protein SNOG_00918 (833 aa).

2 disordered regions span residues 1 to 20 (MTDV…SAFD) and 49 to 71 (HLSP…SANN). The chain crosses the membrane as a helical span at residues 108 to 128 (WPLLVVVLGWLLFLSIAYVFT). The PNPLA domain occupies 301–457 (LCLSGGATFA…RTDIPLKALN (157 aa)). The short motif at 332–336 (GTSGG) is the GXSXG element. Ser-334 serves as the catalytic Nucleophile. Residue Asp-444 is the Proton acceptor of the active site. Disordered stretches follow at residues 630–657 (TKSK…FSRP) and 680–833 (LRTD…GKGL). The segment covering 644–655 (SGSESSSSADFS) has biased composition (low complexity). Residues 689–707 (DTPNSPSLSARLTGWWNTK) show a composition bias toward polar residues. 3 stretches are compositionally biased toward basic and acidic residues: residues 740–750 (RPPKEVRDLQA), 759–769 (RNSDFLEEIRR), and 782–794 (DEGR…RGDV). Positions 809–819 (EFGDNEGDGEE) are enriched in acidic residues.

The protein belongs to the PLPL family.

It is found in the membrane. Functionally, probable lipid hydrolase. The chain is Patatin-like phospholipase domain-containing protein SNOG_00918 from Phaeosphaeria nodorum (strain SN15 / ATCC MYA-4574 / FGSC 10173) (Glume blotch fungus).